Here is a 607-residue protein sequence, read N- to C-terminus: Elongation factor 4 (607 aa).

One can recognise a tr-type G domain in the interval 11–193 (ENIRNFSIIA…KIVEVVPAPD (183 aa)). GTP-binding positions include 23-28 (DHGKST) and 140-143 (NKID).

The protein belongs to the TRAFAC class translation factor GTPase superfamily. Classic translation factor GTPase family. LepA subfamily.

The protein resides in the cell membrane. The enzyme catalyses GTP + H2O = GDP + phosphate + H(+). In terms of biological role, required for accurate and efficient protein synthesis under certain stress conditions. May act as a fidelity factor of the translation reaction, by catalyzing a one-codon backward translocation of tRNAs on improperly translocated ribosomes. Back-translocation proceeds from a post-translocation (POST) complex to a pre-translocation (PRE) complex, thus giving elongation factor G a second chance to translocate the tRNAs correctly. Binds to ribosomes in a GTP-dependent manner. This Staphylococcus aureus (strain USA300) protein is Elongation factor 4.